Here is a 218-residue protein sequence, read N- to C-terminus: Guanylate kinase (218 aa).

The 180-residue stretch at 15 to 194 (GMMLVLSSPS…SIADVRAILR (180 aa)) folds into the Guanylate kinase-like domain. Residue 22–29 (SPSGAGKT) coordinates ATP.

It belongs to the guanylate kinase family.

Its subcellular location is the cytoplasm. The enzyme catalyses GMP + ATP = GDP + ADP. Its function is as follows. Essential for recycling GMP and indirectly, cGMP. The polypeptide is Guanylate kinase (Rhodospirillum rubrum (strain ATCC 11170 / ATH 1.1.1 / DSM 467 / LMG 4362 / NCIMB 8255 / S1)).